A 307-amino-acid chain; its full sequence is Glycerol-3-phosphate dehydrogenase [NAD(P)+] (307 aa).

4 residues coordinate NADPH: Trp-14, Arg-34, Arg-35, and Lys-82. Sn-glycerol 3-phosphate contacts are provided by Lys-82 and Gly-110. Ser-114 lines the NADPH pocket. Residues Lys-165, Asp-218, Ser-228, Arg-229, and Asn-230 each contribute to the sn-glycerol 3-phosphate site. Residue Lys-165 is the Proton acceptor of the active site. Residue Arg-229 coordinates NADPH. Glu-255 contributes to the NADPH binding site.

Belongs to the NAD-dependent glycerol-3-phosphate dehydrogenase family.

It is found in the cytoplasm. The enzyme catalyses sn-glycerol 3-phosphate + NAD(+) = dihydroxyacetone phosphate + NADH + H(+). The catalysed reaction is sn-glycerol 3-phosphate + NADP(+) = dihydroxyacetone phosphate + NADPH + H(+). It functions in the pathway membrane lipid metabolism; glycerophospholipid metabolism. Catalyzes the reduction of the glycolytic intermediate dihydroxyacetone phosphate (DHAP) to sn-glycerol 3-phosphate (G3P), the key precursor for phospholipid synthesis. The polypeptide is Glycerol-3-phosphate dehydrogenase [NAD(P)+] (Nostoc sp. (strain PCC 7120 / SAG 25.82 / UTEX 2576)).